Consider the following 51-residue polypeptide: Insulin (51 aa).

Disulfide bonds link Cys-7–Cys-37, Cys-19–Cys-50, and Cys-36–Cys-41.

The protein belongs to the insulin family. As to quaternary structure, heterodimer of a B chain and an A chain linked by two disulfide bonds.

The protein localises to the secreted. Its function is as follows. Insulin decreases blood glucose concentration. It increases cell permeability to monosaccharides, amino acids and fatty acids. It accelerates glycolysis, the pentose phosphate cycle, and glycogen synthesis in liver. This chain is Insulin (INS), found in Camelus dromedarius (Dromedary).